The following is a 619-amino-acid chain: Probable galacturonosyltransferase 7 (619 aa).

Residues 1–19 (MKGGGGGGGGGGGGKRRWK) are Cytoplasmic-facing. A helical; Signal-anchor for type II membrane protein transmembrane segment spans residues 20–40 (VLVIGVLVLVILSMLVPLAFL). The Lumenal portion of the chain corresponds to 41–619 (LGLHNGFHSP…RFLSDCNVNP (579 aa)). 5 N-linked (GlcNAc...) asparagine glycosylation sites follow: N68, N106, N132, N343, and N421. Residues 95–139 (KSDINVGSRDVNATSGTDSKKRGLPVSPTVVANPSPANKTKSEAS) are disordered. Residues 124–139 (VVANPSPANKTKSEAS) show a composition bias toward polar residues.

It belongs to the glycosyltransferase 8 family. In terms of tissue distribution, expressed in roots, inflorescences, flowers, siliques, leaves and stems.

Its subcellular location is the golgi apparatus membrane. The protein operates within glycan metabolism; pectin biosynthesis. Functionally, may be involved in pectin biosynthesis. The sequence is that of Probable galacturonosyltransferase 7 (GAUT7) from Arabidopsis thaliana (Mouse-ear cress).